An 826-amino-acid polypeptide reads, in one-letter code: Ubiquitin carboxyl-terminal hydrolase 16 (826 aa).

The UBP-type zinc-finger motif lies at Pro-22–Ala-142. 12 residues coordinate Zn(2+): Cys-24, His-26, Cys-48, Cys-51, Cys-74, Cys-77, Cys-82, His-90, His-94, His-103, Cys-116, and Cys-119. Residue Lys-140 forms a Glycyl lysine isopeptide (Lys-Gly) (interchain with G-Cter in SUMO2) linkage. The disordered stretch occupies residues Asn-144–Thr-189. A compositionally biased stretch (basic and acidic residues) spans Leu-158–Ala-180. At Ser-188 the chain carries Phosphoserine. The USP domain occupies Lys-195–Ile-825. The Nucleophile role is filled by Cys-204. Basic and acidic residues predominate over residues Ser-393–Met-407. The interval Ser-393 to Lys-458 is disordered. Residues Glu-408–Asp-419 show a composition bias toward acidic residues. At Ser-414 the chain carries Phosphoserine. Residues Asn-420–Asp-429 show a composition bias toward basic and acidic residues. Over residues His-437–Gln-457 the composition is skewed to basic residues. Phosphoserine occurs at positions 530 and 551. The Proton acceptor role is filled by His-760.

This sequence belongs to the peptidase C19 family. USP16 subfamily. In terms of assembly, homotetramer. Associates with late pre-40S ribosomes. Interacts with CEP78; promoting deubiquitination of tektins. In terms of processing, phosphorylated at the onset of mitosis and dephosphorylated during the metaphase/anaphase transition. Phosphorylation by AURKB enhances the deubiquitinase activity.

The protein resides in the nucleus. The catalysed reaction is Thiol-dependent hydrolysis of ester, thioester, amide, peptide and isopeptide bonds formed by the C-terminal Gly of ubiquitin (a 76-residue protein attached to proteins as an intracellular targeting signal).. In terms of biological role, specifically deubiquitinates 'Lys-120' of histone H2A (H2AK119Ub), a specific tag for epigenetic transcriptional repression, thereby acting as a coactivator. Deubiquitination of histone H2A is a prerequisite for subsequent phosphorylation at 'Ser-11' of histone H3 (H3S10ph), and is required for chromosome segregation when cells enter into mitosis. In resting B- and T-lymphocytes, phosphorylation by AURKB leads to enhance its activity, thereby maintaining transcription in resting lymphocytes. Regulates Hox gene expression via histone H2A deubiquitination. Prefers nucleosomal substrates. Does not deubiquitinate histone H2B. Also deubiquitinates non-histone proteins, such as ribosomal protein RPS27A: deubiquitination of monoubiquitinated RPS27A promotes maturation of the 40S ribosomal subunit. Also mediates deubiquitination of tektin proteins (TEKT1, TEKT2, TEK3, TEKT4 and TEKT5), promoting their stability. In Bos taurus (Bovine), this protein is Ubiquitin carboxyl-terminal hydrolase 16.